Consider the following 758-residue polypeptide: MEKPPFRQNQVCGSWVMKERLGTGGFGHVYLYQNQETSEKIAVKLCRLELNSKNKDRWSRGIQIMKKLKHLNVVTAKDVPEEMMHIALNDLPLLAMEYCSKGDLRKLLSKPENCCGLKESEVLSLLNDVGSGIQYLHENKIIHRDLKPENIVLQEINGKLVHKIIDLGYAKDLDQGSLCTSFVGTLQYLAPELFEGKSYTVTVDFWSFGTMIFECCCGFRPFLHNLQPVQWTSKVRNKGPKDIMAVEDMNGEVRFSTHLPYPNNLSRTLLEPLEGLLQLMLKWDPVQRGLGLNTDSKQPQCFVLLDQILSMKVVHILNMTTTQVHSFLLSPDEGLHSLQQRIENETKIELLNQDLLQETGVMSDPRKPAAQCVLDGVRGWDSYIVYLFDKSLTKYMGPLTARTLPESVNFIVRETKTQLPLSTLKKVWGEAVSYICGLREDYSRLFQGQRAAMLSLLRFNTNLTRYKNMMFSFSQQLKAKLDFFKTSIQYDLEKYSDQMQYGISSEKMLKAWHENEERAAAFAQVAEIGHLDEEIMALHSEIVELQRSPYARRQGDVMEQLQEKAIELYKQLKAKCKMPDPQHGYSDSSEMVKVIVQTVQNQDRVLRDLYAHLSKILLSKQKIIDLFPKIERTLECIKEADTTVMQMQIKRQREFWHLLKIACAQNTTRSSVSQSGEMPSSLSTWNQTQAQCSSRLPMSLQVPHEGDSVNHLLEENQRYLTQLTSLLQETTEEKSESIMAQDWSWTKYESLVAKSPRL.

Residues 15-301 form the Protein kinase domain; that stretch reads WVMKERLGTG…LNTDSKQPQC (287 aa). ATP is bound by residues 21-29 and lysine 44; that span reads LGTGGFGHV. Aspartate 145 serves as the catalytic Proton acceptor. The segment at 456 to 477 is leucine-zipper; sequence LLRFNTNLTRYKNMMFSFSQQL. Positions 741–746 are NEMO-binding; sequence QDWSWT.

It belongs to the protein kinase superfamily. Ser/Thr protein kinase family. I-kappa-B kinase subfamily. As to quaternary structure, directly interacts with ikbkg/nemo.

The protein localises to the cytoplasm. Its subcellular location is the nucleus. It catalyses the reaction L-seryl-[I-kappa-B protein] + ATP = O-phospho-L-seryl-[I-kappa-B protein] + ADP + H(+). Its activity is regulated as follows. Activated when phosphorylated and inactivated when dephosphorylated. In terms of biological role, phosphorylates inhibitors of NF-kappa-B thus leading to the dissociation of the inhibitor/NF-kappa-B complex and ultimately the degradation of the inhibitor. Phosphorylates 'Ser-10' of histone H3 at NF-kappa-B-regulated promoters during inflammatory responses triggered by cytokines. In Danio rerio (Zebrafish), this protein is Inhibitor of nuclear factor kappa-B kinase subunit alpha (chuk).